Here is a 325-residue protein sequence, read N- to C-terminus: G/U mismatch-specific uracil DNA glycosylase (325 aa).

Residues Met1 to Thr11 show a composition bias toward basic and acidic residues. Residues Met1–Ile50 form a disordered region. Residues Lys12–Val23 show a composition bias toward polar residues. Residues Asp34–Arg43 are compositionally biased toward acidic residues.

It belongs to the uracil-DNA glycosylase (UDG) superfamily. TDG/mug family.

It localises to the nucleus. The catalysed reaction is Specifically hydrolyzes mismatched double-stranded DNA and polynucleotides, releasing free uracil.. Functionally, removes uracil from G/U mispairs in ssDNA. Also corrects G/G mispairs. Does not catalyze the removal of thymine from G/T mispairs. This is G/U mismatch-specific uracil DNA glycosylase (thp1) from Schizosaccharomyces pombe (strain 972 / ATCC 24843) (Fission yeast).